The following is a 168-amino-acid chain: MSMLCYTLIIAFLIGIWAAPKSEDNVSLGSPATPDISDTSCAKTHEALKTSQNTDQHSPAPKKAEDQEFGSAANIIVDPKLFQKRRFQSPRVLFSTQPPPLSRDEQSVEFLDNADSLNRNIRAKRGIHPVHNQGEFSVCDSVNVWVANKTTATDIKGNEVTVMVNVKP.

Positions 1 to 18 (MSMLCYTLIIAFLIGIWA) are cleaved as a signal peptide. Residues 19–123 (APKSEDNVSL…ADSLNRNIRA (105 aa)) constitute a propeptide that is removed on maturation. N-linked (GlcNAc...) asparagine glycosylation occurs at asparagine 25. The segment at 48–70 (LKTSQNTDQHSPAPKKAEDQEFG) is disordered. N-linked (GlcNAc...) asparagine glycosylation is present at asparagine 148.

Belongs to the NGF-beta family. In terms of assembly, homodimer; non-covalently linked. As to expression, expressed by the venom gland.

The protein localises to the secreted. Functionally, nerve growth factor is important for the development and maintenance of the sympathetic and sensory nervous systems. It stimulates division and differentiation of sympathetic and embryonic sensory neurons as well as basal forebrain cholinergic neurons in the brain. Its relevance in the snake venom is not clear. However, it has been shown to inhibit metalloproteinase-dependent proteolysis of platelet glycoprotein Ib alpha, suggesting a metalloproteinase inhibition to prevent metalloprotease autodigestion and/or protection against prey proteases. This Echis ocellatus (Ocellated saw-scaled viper) protein is Venom nerve growth factor.